Here is a 573-residue protein sequence, read N- to C-terminus: Poly(ribitol-phosphate) beta-N-acetylglucosaminyltransferase TarS (573 aa).

Residues proline 9, aspartate 41, asparagine 68, arginine 76, 92–94, arginine 127, and glutamate 178 each bind UDP-N-acetyl-alpha-D-glucosamine; that span reads DSD. Aspartate 94 serves as a coordination point for Mn(2+). The active-site Proton acceptor is the aspartate 179. Residues arginine 207 and 211–213 contribute to the UDP-N-acetyl-alpha-D-glucosamine site; that span reads HMS.

It belongs to the glycosyltransferase 2 family. In terms of assembly, homotrimer. It depends on Mn(2+) as a cofactor.

It carries out the reaction 4-O-[(D-ribitylphospho)(n)-di{(2R)-glycerylphospho}]-N-acetyl-beta-D-mannosaminyl-(1-&gt;4)-N-acetyl-alpha-D-glucosaminyl di-trans,octa-cis-undecaprenyl diphosphate + n UDP-N-acetyl-alpha-D-glucosamine = 4-O-([2-N-acetyl-beta-D-glucosaminyl-1-D-ribitylphospho](n)-di{[2R]-1-glycerylphospho})-N-acetyl-beta-D-mannosaminyl-(1-&gt;4)-N-acetyl-alpha-D-glucosaminyl di-trans,octa-cis-undecaprenyl diphosphate + n UDP + n H(+). It participates in cell wall biogenesis; poly(ribitol phosphate) teichoic acid biosynthesis. Functionally, attaches beta-O-GlcNAc (beta-O-N-acetyl-D-glucosamine) residues to the C4 position of poly(RboP)-wall teichoic acids (WTAs). Mediates beta-lactam resistance in methicillin resistant Staphylococcus aureus (MRSA) strains. This is Poly(ribitol-phosphate) beta-N-acetylglucosaminyltransferase TarS from Staphylococcus aureus (strain Mu50 / ATCC 700699).